The chain runs to 350 residues: Dihydroorotase (350 aa).

Zn(2+)-binding residues include His-13 and His-15. Substrate is bound by residues 15 to 17 (HLR) and Asn-41. Residues Lys-99, His-136, and His-174 each coordinate Zn(2+). The residue at position 99 (Lys-99) is an N6-carboxylysine. His-136 contributes to the substrate binding site. Leu-219 lines the substrate pocket. Asp-247 serves as a coordination point for Zn(2+). The active site involves Asp-247. His-251 and Ala-263 together coordinate substrate.

This sequence belongs to the metallo-dependent hydrolases superfamily. DHOase family. Class II DHOase subfamily. In terms of assembly, homodimer. Zn(2+) is required as a cofactor.

It catalyses the reaction (S)-dihydroorotate + H2O = N-carbamoyl-L-aspartate + H(+). Its pathway is pyrimidine metabolism; UMP biosynthesis via de novo pathway; (S)-dihydroorotate from bicarbonate: step 3/3. Its function is as follows. Catalyzes the reversible cyclization of carbamoyl aspartate to dihydroorotate. The protein is Dihydroorotase of Allorhizobium ampelinum (strain ATCC BAA-846 / DSM 112012 / S4) (Agrobacterium vitis (strain S4)).